Reading from the N-terminus, the 667-residue chain is Protein OS-9 (667 aa).

The first 25 residues, 1 to 25, serve as a signal peptide directing secretion; the sequence is MAAETLLSSLLGLLLLGLLLPATLT. In terms of domain architecture, MRH spans 108–230; it reads APCLLKTKDW…TIRTPRLCPH (123 aa). Cys-110 and Cys-123 form a disulfide bridge. Residues Trp-117, Trp-118, and Gln-130 each contribute to the a mannooligosaccharide derivative site. Asn-177 carries N-linked (GlcNAc...) asparagine glycosylation. 2 cysteine pairs are disulfide-bonded: Cys-181–Cys-216 and Cys-196–Cys-228. Residues Asp-182, Arg-188, Glu-212, and Tyr-218 each contribute to the a mannooligosaccharide derivative site. Disordered regions lie at residues 262–450, 506–541, and 636–667; these read QADS…SDRE, EKQS…EHRV, and ERQR…EFDF. Composition is skewed to basic and acidic residues over residues 263-279, 304-328, and 396-408; these read ADSK…RQDP, ENSK…KEET, and PSRE…KGDP. Residues 410–429 show a composition bias toward acidic residues; sequence QQNEVEEEEDDEDEDEDEDE. The segment covering 430–450 has biased composition (basic and acidic residues); it reads RQLLGEFEKELEGILLPSDRE. Basic residues predominate over residues 514–523; it reads KKHRKRRVVP. Positions 636-647 are enriched in basic and acidic residues; that stretch reads ERQRQKELESNY.

The protein belongs to the OS-9 family. Component of the HRD1 complex, which comprises at least SYNV1/HRD1, DERL1/2, FAM8A1, HERPUD1/HERP, OS9, SEL1L and UBE2J1. FAM8A1 is stabilized by interaction with SYNV1, which prevents its proteasomal degradation. OS9 and UBE2J1 recruitment to the complex may be mediated by SEL1L. Through this complex, may interact with ERLEC1 and HSPA5. Interacts (via C-terminus) with CPNE6 (via second C2 domain); this interaction occurs in a calcium-dependent manner in vitro. Interacts with CREB3. In terms of processing, intramolecular disulfide bonds.

It localises to the endoplasmic reticulum lumen. In terms of biological role, lectin component of the HRD1 complex, which functions in endoplasmic reticulum (ER) quality control and ER-associated degradation (ERAD). Specifically recognizes and binds improperly folded glycoproteins as well as hyperglycosylated proteins, retain them in the ER, and transfers them to the ubiquitination machinery and promote their degradation. Possible targets include TRPV4 as well as hyperglycosylated HSP90B1. In Bos taurus (Bovine), this protein is Protein OS-9 (OS9).